We begin with the raw amino-acid sequence, 386 residues long: Succinate--CoA ligase [ADP-forming] subunit beta (386 aa).

The region spanning 9-244 (KHILSRFGVS…YDEEIKEEIE (236 aa)) is the ATP-grasp domain. ATP contacts are provided by residues lysine 46, 53 to 55 (GRG), glutamate 99, cysteine 102, and glutamate 107. Mg(2+) is bound by residues asparagine 199 and aspartate 213. Substrate contacts are provided by residues asparagine 264 and 320–322 (GIM).

This sequence belongs to the succinate/malate CoA ligase beta subunit family. As to quaternary structure, heterotetramer of two alpha and two beta subunits. The cofactor is Mg(2+).

It carries out the reaction succinate + ATP + CoA = succinyl-CoA + ADP + phosphate. The enzyme catalyses GTP + succinate + CoA = succinyl-CoA + GDP + phosphate. It participates in carbohydrate metabolism; tricarboxylic acid cycle; succinate from succinyl-CoA (ligase route): step 1/1. In terms of biological role, succinyl-CoA synthetase functions in the citric acid cycle (TCA), coupling the hydrolysis of succinyl-CoA to the synthesis of either ATP or GTP and thus represents the only step of substrate-level phosphorylation in the TCA. The beta subunit provides nucleotide specificity of the enzyme and binds the substrate succinate, while the binding sites for coenzyme A and phosphate are found in the alpha subunit. This chain is Succinate--CoA ligase [ADP-forming] subunit beta, found in Ehrlichia canis (strain Jake).